A 373-amino-acid polypeptide reads, in one-letter code: 3 beta-hydroxysteroid dehydrogenase/Delta 5--&gt;4-isomerase (373 aa).

Catalysis depends on Tyr-155, which acts as the Proton acceptor. Lys-159 is an NAD(+) binding site. A helical transmembrane segment spans residues 288–308 (IFLKYWLAFLLEIVSFLLSPI).

This sequence belongs to the 3-beta-HSD family.

Its subcellular location is the endoplasmic reticulum membrane. The protein resides in the mitochondrion membrane. It carries out the reaction a 3beta-hydroxy-Delta(5)-steroid + NAD(+) = a 3-oxo-Delta(5)-steroid + NADH + H(+). The enzyme catalyses a 3-oxo-Delta(5)-steroid = a 3-oxo-Delta(4)-steroid. It participates in lipid metabolism; steroid biosynthesis. Its function is as follows. 3-beta-HSD is a bifunctional enzyme, that catalyzes the oxidative conversion of Delta(5)-ene-3-beta-hydroxy steroid, and the oxidative conversion of ketosteroids. The 3-beta-HSD enzymatic system plays a crucial role in the biosynthesis of all classes of hormonal steroids. The chain is 3 beta-hydroxysteroid dehydrogenase/Delta 5--&gt;4-isomerase (HSD3B) from Equus caballus (Horse).